We begin with the raw amino-acid sequence, 284 residues long: Cell division protein ZipA (284 aa).

M1 is a topological domain (periplasmic). The helical transmembrane segment at 2–22 (EIGLREWLIVIGIIVIAGILF) threads the bilayer. The Cytoplasmic segment spans residues 23 to 284 (DGWRRMRGGK…FERRALTQKR (262 aa)). The interval 47-140 (PDDEGSAELL…SASHSDKDQP (94 aa)) is disordered. 3 stretches are compositionally biased toward basic and acidic residues: residues 62 to 75 (LDTH…EHDL), 83 to 102 (REPR…EPHQ), and 119 to 140 (SRDD…KDQP).

The protein belongs to the ZipA family. Interacts with FtsZ via their C-terminal domains.

The protein localises to the cell inner membrane. Essential cell division protein that stabilizes the FtsZ protofilaments by cross-linking them and that serves as a cytoplasmic membrane anchor for the Z ring. Also required for the recruitment to the septal ring of downstream cell division proteins. This Pseudomonas fluorescens (strain ATCC BAA-477 / NRRL B-23932 / Pf-5) protein is Cell division protein ZipA.